The chain runs to 399 residues: DNA polymerase IV (399 aa).

The 183-residue stretch at 5–187 (ILHCDLNNFY…LPVEALLYVG (183 aa)) folds into the UmuC domain. Aspartate 9 and aspartate 105 together coordinate Mg(2+). The active site involves glutamate 106.

The protein belongs to the DNA polymerase type-Y family. As to quaternary structure, monomer. Mg(2+) is required as a cofactor.

The protein resides in the cytoplasm. The enzyme catalyses DNA(n) + a 2'-deoxyribonucleoside 5'-triphosphate = DNA(n+1) + diphosphate. In terms of biological role, poorly processive, error-prone DNA polymerase involved in untargeted mutagenesis. Copies undamaged DNA at stalled replication forks, which arise in vivo from mismatched or misaligned primer ends. These misaligned primers can be extended by PolIV. Exhibits no 3'-5' exonuclease (proofreading) activity. May be involved in translesional synthesis, in conjunction with the beta clamp from PolIII. This is DNA polymerase IV from Acetivibrio thermocellus (strain ATCC 27405 / DSM 1237 / JCM 9322 / NBRC 103400 / NCIMB 10682 / NRRL B-4536 / VPI 7372) (Clostridium thermocellum).